The sequence spans 393 residues: Isocitrate dehydrogenase [NAD] subunit gamma, mitochondrial (393 aa).

The N-terminal 39 residues, 1-39, are a transit peptide targeting the mitochondrion; that stretch reads MALKVATVAGSAAKAVLGPALLCRPWEVLGAHEVPSRNI. Residues Thr-120 and Asn-133 each coordinate citrate. Residues Arg-136, Arg-167, and Asp-254 each coordinate substrate. Residue Asp-254 participates in Mn(2+) binding. Residues Asn-312, Thr-313, and Asn-324 each contribute to the ADP site.

The protein belongs to the isocitrate and isopropylmalate dehydrogenases family. Heterooligomer of subunits alpha (IDH3A), beta (IDH3B), and gamma (IDH3G) in the apparent ratio of 2:1:1. The heterodimer containing one IDH3A and one IDH3B subunit and the heterodimer containing one IDH3A and one IDH3G subunit assemble into a heterotetramer (which contains two subunits of IDH3A, one of IDH3B and one of IDH3G) and further into the heterooctamer. Mg(2+) serves as cofactor. The cofactor is Mn(2+).

It is found in the mitochondrion. The heterotetramer and the heterodimer composed of IDH3A and IDH3G subunits can be allosterically activated by citrate (CIT) or/and ADP, and the two activators can act independently or synergistically. The heterodimer composed of IDH3A and IDH3B subunits cannot be allosterically regulated and the allosteric regulation of the heterotetramer is through the IDH3G subunit and not the IDH3B subunit. The IDH3G subunit contains the allosteric site which consists of a CIT-binding site and an ADP-binding site, and the binding of CIT and ADP causes conformational changes at the allosteric site which are transmitted to the active site in the catalytic subunit (IDH3A) through a cascade of conformational changes at the heterodimer interface, leading to stabilization of the isocitrate-binding at the active site and thus activation of the enzyme. ATP can activate the heterotetramer and the heterodimer composed of IDH3A and IDH3G subunits at low concentrations but inhibits their activities at high concentrations, whereas ATP exhibits only inhibitory effect on the heterodimer composed of IDH3A and IDH3B subunits. Functionally, regulatory subunit which plays a role in the allosteric regulation of the enzyme catalyzing the decarboxylation of isocitrate (ICT) into alpha-ketoglutarate. The heterodimer composed of the alpha (IDH3A) and beta (IDH3B) subunits and the heterodimer composed of the alpha (IDH3A) and gamma (IDH3G) subunits, have considerable basal activity but the full activity of the heterotetramer (containing two subunits of IDH3A, one of IDH3B and one of IDH3G) requires the assembly and cooperative function of both heterodimers. This chain is Isocitrate dehydrogenase [NAD] subunit gamma, mitochondrial (IDH3G), found in Homo sapiens (Human).